The chain runs to 1405 residues: DNA-directed RNA polymerase subunit beta' (1405 aa).

Positions 70, 72, 85, and 88 each coordinate Zn(2+). Residues Asp-460, Asp-462, and Asp-464 each coordinate Mg(2+). Residues Cys-814, Cys-888, Cys-895, and Cys-898 each coordinate Zn(2+).

It belongs to the RNA polymerase beta' chain family. As to quaternary structure, the RNAP catalytic core consists of 2 alpha, 1 beta, 1 beta' and 1 omega subunit. When a sigma factor is associated with the core the holoenzyme is formed, which can initiate transcription. Mg(2+) serves as cofactor. Requires Zn(2+) as cofactor.

The catalysed reaction is RNA(n) + a ribonucleoside 5'-triphosphate = RNA(n+1) + diphosphate. DNA-dependent RNA polymerase catalyzes the transcription of DNA into RNA using the four ribonucleoside triphosphates as substrates. This Shewanella putrefaciens (strain CN-32 / ATCC BAA-453) protein is DNA-directed RNA polymerase subunit beta'.